Reading from the N-terminus, the 190-residue chain is Small ribosomal subunit protein uS5 (190 aa).

An S5 DRBM domain is found at 22 to 85; that stretch reads FVDKLVHINR…DSAKRNLTRV (64 aa).

Belongs to the universal ribosomal protein uS5 family. As to quaternary structure, part of the 30S ribosomal subunit. Contacts proteins S4 and S8.

Its function is as follows. With S4 and S12 plays an important role in translational accuracy. Functionally, located at the back of the 30S subunit body where it stabilizes the conformation of the head with respect to the body. This Bradyrhizobium sp. (strain BTAi1 / ATCC BAA-1182) protein is Small ribosomal subunit protein uS5.